A 363-amino-acid chain; its full sequence is Endopolygalacturonase B (363 aa).

Positions 1–20 are cleaved as a signal peptide; that stretch reads MQLLQSSVIAATVGAALVAA. Residues 21 to 28 constitute a propeptide that is removed on maturation; it reads VPVELKAR. Cysteines 31 and 46 form a disulfide. PbH1 repeat units follow at residues 158–187, 188–209, 210–230, 239–260, 268–290, and 302–347; these read SDNL…DVGS, STYI…AINS, GSHI…SIGS, VEDV…RIKT, VSNV…IVEQ, and TNGI…SITG. N162 carries an N-linked (GlcNAc...) asparagine glycan. The active-site Proton donor is the D202. C204 and C220 are joined by a disulfide. H224 is an active-site residue. Cystine bridges form between C330–C335 and C354–C363. N-linked (GlcNAc...) asparagine glycosylation is present at N356.

It belongs to the glycosyl hydrolase 28 family.

Its subcellular location is the secreted. It carries out the reaction (1,4-alpha-D-galacturonosyl)n+m + H2O = (1,4-alpha-D-galacturonosyl)n + (1,4-alpha-D-galacturonosyl)m.. Involved in maceration and soft-rotting of plant tissue. Hydrolyzes the 1,4-alpha glycosidic bonds of de-esterified pectate in the smooth region of the plant cell wall. The chain is Endopolygalacturonase B (pgaB) from Aspergillus oryzae (strain ATCC 42149 / RIB 40) (Yellow koji mold).